The sequence spans 91 residues: Dynein light chain 1, cytoplasmic (91 aa).

It belongs to the dynein light chain family. In terms of assembly, homodimer. Cytoplasmic dynein consists of two catalytic heavy chains (HCs) and a number of non-catalytic subunits which present intermediate chains (ICs), light intermediate chains (LICs) and light chains (LCs). Component of the nuclear pore complex (NPC). NPC constitutes the exclusive means of nucleocytoplasmic transport. NPCs allow the passive diffusion of ions and small molecules and the active, nuclear transport receptor-mediated bidirectional transport of macromolecules such as proteins, RNAs, ribonucleoparticles (RNPs), and ribosomal subunits across the nuclear envelope. Due to its 8-fold rotational symmetry, all subunits are present with 8 copies or multiples thereof.

The protein resides in the cytoplasm. It is found in the cytoskeleton. It localises to the nucleus. Its subcellular location is the nuclear pore complex. In terms of biological role, acts as one of several non-catalytic accessory components of the cytoplasmic dynein complex that are thought to be involved in linking dynein to cargos and to adapter proteins that regulate dynein function. Cytoplasmic dynein 1 acts as a motor for the intracellular retrograde motility of vesicles and organelles along microtubules. May play a role in changing or maintaining the spatial distribution of cytoskeletal structures. Also a component of the nuclear pore complex. This Debaryomyces hansenii (strain ATCC 36239 / CBS 767 / BCRC 21394 / JCM 1990 / NBRC 0083 / IGC 2968) (Yeast) protein is Dynein light chain 1, cytoplasmic (DYN2).